We begin with the raw amino-acid sequence, 78 residues long: FXYD domain-containing ion transport regulator 7 (78 aa).

Residues 1–22 lie on the Extracellular side of the membrane; it reads MATQVPTKVPQDPDPFYYDYDT. Residues Thr3 and Thr7 are each glycosylated (O-linked (GlcNAc) threonine). The chain crosses the membrane as a helical span at residues 23 to 43; it reads VQTVGMTLATILFLLGILIIL. Residues 44-78 lie on the Cytoplasmic side of the membrane; the sequence is SKKVKCRKADSRSESPTCKSCKSELPSSAPGGGGV. A disordered region spans residues 52 to 78; the sequence is ADSRSESPTCKSCKSELPSSAPGGGGV. Position 71 is a phosphoserine (Ser71).

This sequence belongs to the FXYD family. Regulatory subunit of the sodium/potassium-transporting ATPase which is composed of a catalytic alpha subunit, a non-catalytic beta subunit and an additional regulatory subunit. The regulatory subunit, a member of the FXYD protein family, modulates the enzymatic activity in a tissue- and isoform-specific way by changing affinities of the Na+/K+-ATPase toward Na(+), K(+) or ATP. In terms of processing, O-glycosylated; required for stabilization and translocation to the plasma membrane.

It localises to the cell membrane. In terms of biological role, associates with and regulates the activity of the sodium/potassium-transporting ATPase (NKA) which catalyzes the hydrolysis of ATP coupled with the exchange of Na(+) and K(+) ions across the plasma membrane. Reduces the apparent affinity for external K(+), an effect that depends on the presence of external Na(+) and voltage. Increases the apparent affinity for intracellular Na(+). The chain is FXYD domain-containing ion transport regulator 7 (FXYD7) from Bos taurus (Bovine).